The following is a 134-amino-acid chain: Profilin-3 (134 aa).

A disulfide bond links Cys-13 and Cys-118. The Involved in PIP2 interaction motif lies at 84–100 (AVIRGKKGSGGITIKKT). Residue Thr-114 is modified to Phosphothreonine.

This sequence belongs to the profilin family. In terms of assembly, occurs in many kinds of cells as a complex with monomeric actin in a 1:1 ratio. In terms of processing, phosphorylated by MAP kinases.

Its subcellular location is the cytoplasm. It localises to the cytoskeleton. Binds to actin and affects the structure of the cytoskeleton. At high concentrations, profilin prevents the polymerization of actin, whereas it enhances it at low concentrations. The protein is Profilin-3 of Olea europaea (Common olive).